The chain runs to 399 residues: MIKKELPDEFGHFGPYGGMFVADTLVSALKQLEHAYTKYRNDQDFLSELHTELKDYVGRPNPLYHAVHLSKKIGGAQIYLKREDLNHTGAHKINNTIGQALLAKRMGKTRVIAETGAGQHGVATATVAAKFGFQCVVYMGSEDIKRQSSNVYRMKLLGAEVVPVTSGSKTLKDALNEALRDWVSHVDDTFYIIGTVAGPHPYPQMVRDFQAIIGVEARAQHMEKTGRLPDALVACVGGGSNAIGLFYPFLNDQSVMIYGVEAGGKGIETGEHSASLIAGKPGVLHGNRTYLLCDEYGQVKDTHSVSAGLDYPGVGPEHAYLKDTGRVIYKAINDSEALDAFRLLTHTEGIIPALESSHAVAYAIQLAKTMSKEQSIIVNLSGRGDKDMHTVAAIDGITI.

K92 is modified (N6-(pyridoxal phosphate)lysine).

The protein belongs to the TrpB family. Tetramer of two alpha and two beta chains. It depends on pyridoxal 5'-phosphate as a cofactor.

The enzyme catalyses (1S,2R)-1-C-(indol-3-yl)glycerol 3-phosphate + L-serine = D-glyceraldehyde 3-phosphate + L-tryptophan + H2O. The protein operates within amino-acid biosynthesis; L-tryptophan biosynthesis; L-tryptophan from chorismate: step 5/5. In terms of biological role, the beta subunit is responsible for the synthesis of L-tryptophan from indole and L-serine. This Legionella pneumophila (strain Corby) protein is Tryptophan synthase beta chain.